The chain runs to 297 residues: Phosphoribosylaminoimidazole-succinocarboxamide synthase (297 aa).

It belongs to the SAICAR synthetase family.

The catalysed reaction is 5-amino-1-(5-phospho-D-ribosyl)imidazole-4-carboxylate + L-aspartate + ATP = (2S)-2-[5-amino-1-(5-phospho-beta-D-ribosyl)imidazole-4-carboxamido]succinate + ADP + phosphate + 2 H(+). The protein operates within purine metabolism; IMP biosynthesis via de novo pathway; 5-amino-1-(5-phospho-D-ribosyl)imidazole-4-carboxamide from 5-amino-1-(5-phospho-D-ribosyl)imidazole-4-carboxylate: step 1/2. This chain is Phosphoribosylaminoimidazole-succinocarboxamide synthase, found in Corynebacterium glutamicum (strain ATCC 13032 / DSM 20300 / JCM 1318 / BCRC 11384 / CCUG 27702 / LMG 3730 / NBRC 12168 / NCIMB 10025 / NRRL B-2784 / 534).